Here is a 151-residue protein sequence, read N- to C-terminus: Transcriptional repressor NrdR (151 aa).

A zinc finger lies at 3-34 (CPYCGSLDNKVIDSRLSRDDTETRRRRECLEC). One can recognise an ATP-cone domain in the interval 49–139 (LMIVKKDGRR…VYREFKDVHD (91 aa)).

Belongs to the NrdR family. It depends on Zn(2+) as a cofactor.

In terms of biological role, negatively regulates transcription of bacterial ribonucleotide reductase nrd genes and operons by binding to NrdR-boxes. The polypeptide is Transcriptional repressor NrdR (Desulfosudis oleivorans (strain DSM 6200 / JCM 39069 / Hxd3) (Desulfococcus oleovorans)).